The primary structure comprises 102 residues: uncharacterized protein (102 aa).

This is an uncharacterized protein from Enterobacteria phage T4 (Bacteriophage T4).